The primary structure comprises 173 residues: Translation initiation factor IF-3 (173 aa).

It belongs to the IF-3 family. In terms of assembly, monomer.

Its subcellular location is the cytoplasm. IF-3 binds to the 30S ribosomal subunit and shifts the equilibrium between 70S ribosomes and their 50S and 30S subunits in favor of the free subunits, thus enhancing the availability of 30S subunits on which protein synthesis initiation begins. The polypeptide is Translation initiation factor IF-3 (Caulobacter vibrioides (strain ATCC 19089 / CIP 103742 / CB 15) (Caulobacter crescentus)).